The following is a 1074-amino-acid chain: Topoisomerase 1-associated factor 1 (1074 aa).

Disordered stretches follow at residues Asn-572–Ile-595 and Glu-936–Thr-1074. Composition is skewed to basic residues over residues Leu-948–Ser-962 and Gly-978–Lys-991. Residues Glu-1014–Asp-1031 are compositionally biased toward basic and acidic residues. Basic residues predominate over residues Val-1046–Gly-1055.

The protein belongs to the timeless family.

It is found in the nucleus. Involved in chromosome segregation during meiosis and DNA damage repair. This is Topoisomerase 1-associated factor 1 (TOF1) from Cryptococcus neoformans var. neoformans serotype D (strain B-3501A) (Filobasidiella neoformans).